Reading from the N-terminus, the 98-residue chain is AQIVKLGGDDGSLAFVPSKISVAAGEAIEFVNNAGFPHNIVFDEDAVPAGVDADAISYDDYLNSKGETVVRKLSTPGVYGVYCEPHAGAGMKMTITVQ.

In terms of domain architecture, Plastocyanin-like spans 1-98; that stretch reads AQIVKLGGDD…AGMKMTITVQ (98 aa). Cu(2+) is bound by residues histidine 38, cysteine 83, histidine 86, and methionine 91.

This sequence belongs to the plastocyanin family. Requires Cu(2+) as cofactor.

The protein localises to the plastid. It localises to the chloroplast thylakoid membrane. Participates in electron transfer between P700 and the cytochrome b6-f complex in photosystem I. Has antiviral activity against Potato virus Y (strain N). This is Plastocyanin (PETE) from Ulva pertusa (Sea lettuce).